Here is a 142-residue protein sequence, read N- to C-terminus: Transcriptional regulator MraZ (142 aa).

SpoVT-AbrB domains follow at residues 5–47 (EFQH…PQHE) and 76–119 (ATEC…SKEE).

This sequence belongs to the MraZ family. As to quaternary structure, forms oligomers.

It is found in the cytoplasm. It localises to the nucleoid. The sequence is that of Transcriptional regulator MraZ from Desulforamulus reducens (strain ATCC BAA-1160 / DSM 100696 / MI-1) (Desulfotomaculum reducens).